Consider the following 324-residue polypeptide: Ribosomal large subunit pseudouridine synthase D (324 aa).

The S4 RNA-binding domain occupies 17-90 (QRLDQALAEL…LPLNIVYEDD (74 aa)). Aspartate 138 is an active-site residue.

Belongs to the pseudouridine synthase RluA family.

It localises to the cytoplasm. It carries out the reaction uridine(1911/1915/1917) in 23S rRNA = pseudouridine(1911/1915/1917) in 23S rRNA. Responsible for synthesis of pseudouridine from uracil at positions 1911, 1915 and 1917 in 23S ribosomal RNA. This Pasteurella multocida (strain Pm70) protein is Ribosomal large subunit pseudouridine synthase D (rluD).